Here is a 257-residue protein sequence, read N- to C-terminus: Flap endonuclease Xni (257 aa).

A Mg(2+)-binding site is contributed by Asp109. Residues 165–254 (VKPEQLADYW…GFNLQDIRYE (90 aa)) form the 5'-3' exonuclease domain. Leu176, Pro185, Ile187, and Ile190 together coordinate K(+). The segment at 189–194 (GIGPKA) is interaction with DNA.

The protein belongs to the Xni family. Mg(2+) is required as a cofactor. The cofactor is K(+).

Its function is as follows. Has flap endonuclease activity. During DNA replication, flap endonucleases cleave the 5'-overhanging flap structure that is generated by displacement synthesis when DNA polymerase encounters the 5'-end of a downstream Okazaki fragment. The sequence is that of Flap endonuclease Xni from Vibrio atlanticus (strain LGP32) (Vibrio splendidus (strain Mel32)).